The chain runs to 341 residues: S-adenosylmethionine:tRNA ribosyltransferase-isomerase (341 aa).

This sequence belongs to the QueA family. In terms of assembly, monomer.

It localises to the cytoplasm. It catalyses the reaction 7-aminomethyl-7-carbaguanosine(34) in tRNA + S-adenosyl-L-methionine = epoxyqueuosine(34) in tRNA + adenine + L-methionine + 2 H(+). The protein operates within tRNA modification; tRNA-queuosine biosynthesis. Its function is as follows. Transfers and isomerizes the ribose moiety from AdoMet to the 7-aminomethyl group of 7-deazaguanine (preQ1-tRNA) to give epoxyqueuosine (oQ-tRNA). The chain is S-adenosylmethionine:tRNA ribosyltransferase-isomerase from Clostridium botulinum (strain Kyoto / Type A2).